The chain runs to 703 residues: Ion-translocating oxidoreductase complex subunit C (703 aa).

4Fe-4S ferredoxin-type domains follow at residues 369 to 398 and 408 to 437; these read YDPQ…QQMY and KSNQ…IQYF. Residues Cys378, Cys381, Cys384, Cys388, Cys417, Cys420, Cys423, and Cys427 each coordinate [4Fe-4S] cluster. Disordered stretches follow at residues 467 to 542 and 555 to 680; these read RLER…PDNS and RQQT…PKKA. The span at 485 to 497 shows a compositional bias: basic and acidic residues; that stretch reads ARREELAANKGED. Residues 559–577 show a composition bias toward low complexity; sequence NGNSPVSSASNSDSATISA. Residues 578-592 show a composition bias toward polar residues; that stretch reads DNTHSTPKTAQNQTA. Low complexity-rich tracts occupy residues 598 to 629 and 641 to 669; these read AAVA…TEKT and AAVA…EKTA.

Belongs to the 4Fe4S bacterial-type ferredoxin family. RnfC subfamily. In terms of assembly, the complex is composed of six subunits: RnfA, RnfB, RnfC, RnfD, RnfE and RnfG. The cofactor is [4Fe-4S] cluster.

It is found in the cell inner membrane. Its function is as follows. Part of a membrane-bound complex that couples electron transfer with translocation of ions across the membrane. In Actinobacillus succinogenes (strain ATCC 55618 / DSM 22257 / CCUG 43843 / 130Z), this protein is Ion-translocating oxidoreductase complex subunit C.